The following is a 520-amino-acid chain: Acetylcholine receptor subunit delta (520 aa).

The N-terminal stretch at 1-24 (MAGPVLTLGLLAALVVCALPGSWG) is a signal peptide. Topologically, residues 25–248 (LNEEQRLIQH…VTFYLIIRRK (224 aa)) are extracellular. 3 N-linked (GlcNAc...) asparagine glycosylation sites follow: Asn-100, Asn-167, and Asn-193. A disulfide bridge connects residues Cys-154 and Cys-168. 3 helical membrane passes run 249 to 273 (PLFY…VFYL), 281 to 299 (TSVA…LLIS), and 315 to 336 (FLLF…VLNI). The Cytoplasmic segment spans residues 337–474 (HFRTPSTHVL…WNQVARTVDR (138 aa)). Tyr-393 bears the Phosphotyrosine; by Tyr-kinases mark. A helical membrane pass occupies residues 475–493 (LCLFVVTPVMVVGTAWIFL).

It belongs to the ligand-gated ion channel (TC 1.A.9) family. Acetylcholine receptor (TC 1.A.9.1) subfamily. Delta/CHRND sub-subfamily. In terms of assembly, pentamer of two alpha chains, and one each of the beta, delta, and gamma (in immature muscle) or epsilon (in mature muscle) chains. The muscle heteropentamer composed of alpha-1, beta-1, delta, epsilon subunits interacts with the alpha-conotoxin ImII.

Its subcellular location is the postsynaptic cell membrane. The protein resides in the cell membrane. It catalyses the reaction K(+)(in) = K(+)(out). It carries out the reaction Na(+)(in) = Na(+)(out). In terms of biological role, after binding acetylcholine, the AChR responds by an extensive change in conformation that affects all subunits and leads to opening of an ion-conducting channel across the plasma membrane. This Mus musculus (Mouse) protein is Acetylcholine receptor subunit delta (Chrnd).